Consider the following 204-residue polypeptide: Protein PAXX (204 aa).

Residues 37 to 79 (FNLYVTDAAELWSTCFTPDSLAALKARFGLSAAEDITPRFRAA) form the PISA domain. At Ser-134 the chain carries Phosphoserine. The interval 143–204 (EETAVSPRKS…PAGGVDFDET (62 aa)) is disordered. Thr-145 bears the Phosphothreonine mark. Ser-148 and Ser-152 each carry phosphoserine. A mediates interaction with XRCC5/Ku80 and XRCC6/Ku70 and association with the non-homologous end joining core complex region spans residues 171-204 (GPGPGVRRRCPGESLINPGFKSKKPAGGVDFDET). The XLM motif lies at 190 to 204 (FKSKKPAGGVDFDET).

It belongs to the XRCC4-XLF family. PAXX subfamily. In terms of assembly, homodimer. Interacts with the DNA-bound XRCC5/Ku80 and XRCC6/Ku70 heterodimer (Ku complex); the interaction is direct. Associated component of the non-homologous end joining (NHEJ) complex, composed of the core proteins PRKDC, LIG4, XRCC4, XRCC6/Ku70, XRCC5/Ku86 and NHEJ1/XLF. Interacts with POLL (DNA polymerase lambda); promoting POLL recruitment to double-strand breaks (DSBs) and stimulation of the end-filling activity of POLL. Phosphorylation may inhibit interaction with the DNA-bound XRCC5/Ku80 and XRCC6/Ku70 heterodimer (Ku complex).

It is found in the nucleus. Its subcellular location is the chromosome. The protein localises to the cytoplasm. Its function is as follows. Non-essential DNA repair protein involved in DNA non-homologous end joining (NHEJ); participates in double-strand break (DSB) repair and V(D)J recombination. May act as a scaffold required for accumulation of the Ku heterodimer, composed of XRCC5/Ku80 and XRCC6/Ku70, at double-strand break sites and promote the assembly and/or stability of the NHEJ machinery. Involved in NHEJ by promoting the ligation of blunt-ended DNA ends. Together with NHEJ1/XLF, collaborates with DNA polymerase lambda (POLL) to promote joining of non-cohesive DNA ends. Constitutes a non-essential component of classical NHEJ: has a complementary but distinct function with NHEJ1/XLF in DNA repair. Able to restrict infection by herpesvirus 1 (HSV-1) via an unknown mechanism. The chain is Protein PAXX from Homo sapiens (Human).